Consider the following 106-residue polypeptide: Small ribosomal subunit protein uS10 (106 aa).

The protein belongs to the universal ribosomal protein uS10 family. In terms of assembly, part of the 30S ribosomal subunit.

Functionally, involved in the binding of tRNA to the ribosomes. The protein is Small ribosomal subunit protein uS10 of Caldicellulosiruptor bescii (strain ATCC BAA-1888 / DSM 6725 / KCTC 15123 / Z-1320) (Anaerocellum thermophilum).